Consider the following 216-residue polypeptide: Ribose-5-phosphate isomerase A (216 aa).

Residues 26–29 (TGST), 79–82 (DGAD), and 92–95 (KGGG) each bind substrate. E101 (proton acceptor) is an active-site residue. Residue K119 coordinates substrate.

The protein belongs to the ribose 5-phosphate isomerase family. As to quaternary structure, homodimer.

The enzyme catalyses aldehydo-D-ribose 5-phosphate = D-ribulose 5-phosphate. The protein operates within carbohydrate degradation; pentose phosphate pathway; D-ribose 5-phosphate from D-ribulose 5-phosphate (non-oxidative stage): step 1/1. In terms of biological role, catalyzes the reversible conversion of ribose-5-phosphate to ribulose 5-phosphate. The sequence is that of Ribose-5-phosphate isomerase A from Legionella pneumophila (strain Paris).